A 529-amino-acid chain; its full sequence is Zinc finger protein 572 (529 aa).

A disordered region spans residues 1 to 125 (MEQEQKLLVS…TGPAGQQNPS (125 aa)). Residue Lys6 forms a Glycyl lysine isopeptide (Lys-Gly) (interchain with G-Cter in SUMO2) linkage. Over residues 22–42 (KNTITGDESKNNLKTVQFSNS) the composition is skewed to polar residues. A compositionally biased stretch (basic and acidic residues) spans 43 to 68 (KADKERASKWSRSDGPENYKDEDTKE). Residues 87–96 (NDSNLGSQRN) show a composition bias toward polar residues. 12 C2H2-type zinc fingers span residues 131–153 (YKCS…QRTH), 159–181 (YRCS…LRTH), 187–209 (YQCG…ERTH), 215–237 (YKCP…HRSH), 243–265 (YECP…QRTH), 271–293 (YKCP…QRTH), 299–321 (YKCP…QRIH), 327–349 (YQCI…QKMH), 383–405 (YKCC…QRTH), 411–433 (YRCS…QRTH), 439–461 (YKCP…RRTH), and 467–489 (YKCT…RKIH).

It belongs to the krueppel C2H2-type zinc-finger protein family.

The protein resides in the nucleus. Functionally, may be involved in transcriptional regulation. This chain is Zinc finger protein 572 (ZNF572), found in Bos taurus (Bovine).